A 173-amino-acid chain; its full sequence is MGSVNSRGHKAQVVMLGLDCAGKTTILYKLKGNRLVDTLPTVGFNVEPLEAPGHVSLTLWDIGGQTQLRATWKDYLEGIDLLVYVLDSTDEARLPEAVAELEEVLEDPNMAGVPFLVLANKQEAPDALPLLEIRNRLDLERFQDHCWELRACSALTGQGLQEARQSLLHLLRS.

Glycine 2 carries the N-myristoyl glycine lipid modification. GTP is bound by residues 17–24 (GLDCAGKT), 61–65 (DIGGQ), and 120–123 (NKQE).

This sequence belongs to the small GTPase superfamily. Arf family.

May play a role in apoptosis. May act as a tumor suppressor. The protein is ADP-ribosylation factor-like protein 11 (Arl11) of Rattus norvegicus (Rat).